Reading from the N-terminus, the 242-residue chain is uncharacterized protein (242 aa).

This is an uncharacterized protein from Aquifex aeolicus (strain VF5).